We begin with the raw amino-acid sequence, 190 residues long: Probable nicotinate-nucleotide adenylyltransferase (190 aa).

It belongs to the NadD family.

It catalyses the reaction nicotinate beta-D-ribonucleotide + ATP + H(+) = deamido-NAD(+) + diphosphate. It functions in the pathway cofactor biosynthesis; NAD(+) biosynthesis; deamido-NAD(+) from nicotinate D-ribonucleotide: step 1/1. Its function is as follows. Catalyzes the reversible adenylation of nicotinate mononucleotide (NaMN) to nicotinic acid adenine dinucleotide (NaAD). The sequence is that of Probable nicotinate-nucleotide adenylyltransferase from Borrelia turicatae (strain 91E135).